Consider the following 617-residue polypeptide: Vacuolar protein sorting-associated protein 33A (617 aa).

The interval 268–287 is disordered; the sequence is NFPSDGALPGGGGSGPRVEE.

Belongs to the STXBP/unc-18/SEC1 family. Component of the class C core vacuole/endosome tethering (CORVET) complex composed of at least Vps8, dor/Vps18, car/Vps33A and Vps16A; unlike in other species, Vps11 is not part of the Drosophila complex. Due to the reduced number of components the Drosophila CORVET complex is often referred to as the miniCORVET complex. Interacts with ema. Component of the homotypic fusion and vacuole protein sorting (HOPS) complex, composed of Vps16A, car/Vps33A, dor/Vps18, Vps39, Vps11 and lt/Vps41. The tethering complex core made up of Vps16A, car/Vps33A and dor/Vps18 and shared by both HOPS and CORVET, preferentially associates with CORVET specific Vps8 over HOPS specific lt/Vps41. Interacts with Syx17 (via SNARE domain); the interaction requires Vps16A, may involve additional components of the HOPS complex and may promote assembly of the Syx17-Snap29-Vamp7 trans-SNARE complex.

Its subcellular location is the early endosome. The protein resides in the late endosome membrane. It localises to the lysosome membrane. Its function is as follows. Core component of the class C core vacuole/endosome tethering (CORVET) and the homotypic fusion and vacuole protein sorting (HOPS) tethering complexes involved in endo-lysosomal vesicle trafficking and lysosome biogenesis. The CORVET complex facilitates docking and fusion of endosomal vesicles during endosome maturation, acts upstream of HOPS, but is not involved in autophagic flux. The CORVET complex may cooperate with the early endosomal tether Rbsn-5 to mediate endosomal fusion. The HOPS complex facilitates docking and fusion of lysosomes with late endosomes and several other types of vesicles. The HOPS complex is also involved in autophagy and crinophagy (the elimination of unused secretory granules through their fusion with lysosomes). The HOPS complex probably instigates autophagosome-lysosome fusion by binding autophagosome associated Syx17/syntaxin 17 and promoting assembly of the trans-SNARE complex. Independent of Syx17/syntaxin 17 HOPS is involved in biosynthetic transport to lysosomes and lysosome-related organelles such as eye-pigment granules. Required for endocytic degradation of boss/bride of sevenless and N/Notch in developing ommatidia. This chain is Vacuolar protein sorting-associated protein 33A, found in Drosophila melanogaster (Fruit fly).